The following is a 409-amino-acid chain: Peptidase T (409 aa).

A Zn(2+)-binding site is contributed by H78. The active site involves D80. Zn(2+) is bound at residue D140. E174 (proton acceptor) is an active-site residue. Zn(2+)-binding residues include E175, D197, and H379.

The protein belongs to the peptidase M20B family. Requires Zn(2+) as cofactor.

The protein resides in the cytoplasm. It carries out the reaction Release of the N-terminal residue from a tripeptide.. Cleaves the N-terminal amino acid of tripeptides. The sequence is that of Peptidase T from Aliivibrio fischeri (strain ATCC 700601 / ES114) (Vibrio fischeri).